A 281-amino-acid chain; its full sequence is Ornithine lipid ester-linked acyl 2-hydroxylase (281 aa).

Residues 1–24 (MTESPLSAPAPTSNQSPAPEQTFG) show a composition bias toward polar residues. A disordered region spans residues 1 to 29 (MTESPLSAPAPTSNQSPAPEQTFGTAGIA).

This sequence belongs to the aspartyl/asparaginyl beta-hydroxylase family.

It catalyses the reaction an N(2)-[(3R)-3-(2-saturated-acyloxy)acyl]-L-ornithine lipid + 2-oxoglutarate + O2 = a 2-hydroxyornithine lipid + succinate + CO2. The protein operates within lipid metabolism. Functionally, involved in the biosynthesis of ornithine lipids (OLs), which are phosphorus-free membrane lipids. Catalyzes the hydroxylation at the 2 position of the secondary fatty acid of OL. Contributes to symbiotic performance and acid tolerance. This chain is Ornithine lipid ester-linked acyl 2-hydroxylase, found in Rhizobium tropici.